We begin with the raw amino-acid sequence, 498 residues long: Argininosuccinate lyase 1 (498 aa).

This sequence belongs to the lyase 1 family. Argininosuccinate lyase subfamily.

It is found in the cytoplasm. The catalysed reaction is 2-(N(omega)-L-arginino)succinate = fumarate + L-arginine. It participates in amino-acid biosynthesis; L-arginine biosynthesis; L-arginine from L-ornithine and carbamoyl phosphate: step 3/3. In Shouchella clausii (strain KSM-K16) (Alkalihalobacillus clausii), this protein is Argininosuccinate lyase 1.